A 357-amino-acid polypeptide reads, in one-letter code: Glutamine synthetase root isozyme 5 (357 aa).

One can recognise a GS beta-grasp domain in the interval 19–99 (IIAEYIWVGG…VMCDCYTPQG (81 aa)). The 252-residue stretch at 106–357 (KRYKAATVFS…ADTTILWKGN (252 aa)) folds into the GS catalytic domain.

The protein belongs to the glutamine synthetase family. In terms of assembly, homooctamer. Found mainly in the cortical tissues of seedling roots, stem and seedling shoot.

Its subcellular location is the cytoplasm. The enzyme catalyses L-glutamate + NH4(+) + ATP = L-glutamine + ADP + phosphate + H(+). In terms of biological role, plays a role in the flow of nitrogen into nitrogenous organic compounds. The sequence is that of Glutamine synthetase root isozyme 5 (GS1-5) from Zea mays (Maize).